The following is a 338-amino-acid chain: UPF0324 membrane protein HI_1643 (338 aa).

Helical transmembrane passes span 5-23 (PFYF…ANYL), 33-55 (HISA…YPQF), 62-84 (GVLF…RLTF), 94-116 (AVVT…GIRY), 123-145 (LVYL…AEPV), 155-177 (VAIA…FYTW), 222-239 (LRVM…WLLT), 254-273 (IPWF…FDLL), 280-302 (LFVE…TTQA), and 312-334 (PLVL…NYGI).

The protein belongs to the UPF0324 family.

The protein localises to the cell membrane. In Haemophilus influenzae (strain ATCC 51907 / DSM 11121 / KW20 / Rd), this protein is UPF0324 membrane protein HI_1643.